The chain runs to 1555 residues: UDP-glucose:glycoprotein glucosyltransferase 1 (1555 aa).

An N-terminal signal peptide occupies residues 1-42; sequence MGCKGDASGACAAGALPVTGVCYKMGVLVVLTVLWLFSSVKA. N-linked (GlcNAc...) asparagine glycosylation is found at N536 and N1228. Positions 1244–1555 are glucosyltransferase; the sequence is KTEEVKQDKD…REGPQKREEL (312 aa). S1277 carries the phosphoserine modification. A disordered region spans residues 1534-1555; the sequence is GALYKEKTKEPSREGPQKREEL. Positions 1552–1555 match the Prevents secretion from ER motif; sequence REEL.

It belongs to the glycosyltransferase 8 family. As to quaternary structure, monomer as well as in a tight complex with SELENOF. Interacts with METTL23. Part of a large chaperone multiprotein complex comprising DNAJB11, HSP90B1, HSPA5, HYOU, PDIA2, PDIA4, PDIA6, PPIB, SDF2L1, UGGT1 and very small amounts of ERP29, but not, or at very low levels, CALR nor CANX. Requires Ca(2+) as cofactor. Mn(2+) is required as a cofactor. In terms of tissue distribution, higher levels in pancreas, skeletal muscle, kidney, and brain. Low levels in lung and heart.

The protein localises to the endoplasmic reticulum lumen. Its subcellular location is the endoplasmic reticulum-Golgi intermediate compartment. The catalysed reaction is N(4)-(alpha-D-Man-(1-&gt;2)-alpha-D-Man-(1-&gt;2)-alpha-D-Man-(1-&gt;3)-[alpha-D-Man-(1-&gt;2)-alpha-D-Man-(1-&gt;3)-[alpha-D-Man-(1-&gt;2)-alpha-D-Man-(1-&gt;6)]-alpha-D-Man-(1-&gt;6)]-beta-D-Man-(1-&gt;4)-beta-D-GlcNAc-(1-&gt;4)-beta-D-GlcNAc)-L-asparaginyl-[protein] (N-glucan mannose isomer 9A1,2,3B1,2,3) + UDP-alpha-D-glucose = N(4)-(alpha-D-Glc-(1-&gt;3)-alpha-D-Man-(1-&gt;2)-alpha-D-Man-(1-&gt;2)-alpha-D-Man-(1-&gt;3)-[alpha-D-Man-(1-&gt;2)-alpha-D-Man-(1-&gt;3)-[alpha-D-Man-(1-&gt;2)-alpha-D-Man-(1-&gt;6)]-alpha-D-Man-(1-&gt;6)]-beta-D-Man-(1-&gt;4)-beta-D-GlcNAc-(1-&gt;4)-beta-D-GlcNAc)-L-asparaginyl-[protein] + UDP + H(+). Its pathway is protein modification; protein glycosylation. Catalytic activity is enhanced by complex formation with SELENOF. Recognizes glycoproteins with minor folding defects. Reglucosylates single N-glycans near the misfolded part of the protein, thus providing quality control for protein folding in the endoplasmic reticulum. Reglucosylated proteins are recognized by calreticulin for recycling to the endoplasmic reticulum and refolding or degradation. In Homo sapiens (Human), this protein is UDP-glucose:glycoprotein glucosyltransferase 1 (UGGT1).